Here is a 27-residue protein sequence, read N- to C-terminus: Protamine-A (27 aa).

A disordered region spans residues 1–27 (ARRRRRHASTKLKRRRRRRRHGKKSHK).

Testis.

Its subcellular location is the nucleus. The protein localises to the chromosome. Functionally, protamines substitute for histones in the chromatin of sperm during the haploid phase of spermatogenesis. They compact sperm DNA into a highly condensed, stable and inactive complex. This is Protamine-A from Acipenser stellatus (Sevruga).